Here is a 50-residue protein sequence, read N- to C-terminus: Small ribosomal subunit protein uS14 (50 aa).

Zn(2+) is bound by residues C15, C18, C33, and C36.

The protein belongs to the universal ribosomal protein uS14 family. Zinc-binding uS14 subfamily. As to quaternary structure, part of the 30S ribosomal subunit. The cofactor is Zn(2+).

Its function is as follows. Binds 16S rRNA, required for the assembly of 30S particles. This chain is Small ribosomal subunit protein uS14, found in Methanococcoides burtonii (strain DSM 6242 / NBRC 107633 / OCM 468 / ACE-M).